The chain runs to 271 residues: Sulfur carrier protein adenylyltransferase (271 aa).

ATP contacts are provided by residues Arg-13, Gly-40, Glu-61, Arg-72, Lys-85, Leu-109, and 129-133; that span reads DNFPT. Cys-175 and Cys-178 together coordinate Zn(2+). Residue Cys-192 forms a Glycyl cysteine thioester (Cys-Gly) (interchain with G-Cter in TtuB) linkage. Residues Cys-249 and Cys-252 each coordinate Zn(2+).

It belongs to the HesA/MoeB/ThiF family. Zn(2+) is required as a cofactor. Conjugated to TtuB via a covalent linkage that likely involves a lysine residue. Is able to form a covalent thioester adduct with TtuB via Cys-192 in vitro.

The catalysed reaction is [molybdopterin-synthase sulfur-carrier protein]-C-terminal Gly-Gly + ATP + H(+) = [molybdopterin-synthase sulfur-carrier protein]-C-terminal Gly-Gly-AMP + diphosphate. It carries out the reaction [ThiS sulfur-carrier protein]-C-terminal Gly-Gly + ATP + H(+) = [ThiS sulfur-carrier protein]-C-terminal Gly-Gly-AMP + diphosphate. It catalyses the reaction [TtuB sulfur-carrier protein]-C-terminal Gly-Gly + ATP + H(+) = [TtuB sulfur-carrier protein]-C-terminal Gly-Gly-AMP + diphosphate. The protein operates within tRNA modification. It participates in cofactor biosynthesis; thiamine diphosphate biosynthesis. Its pathway is cofactor biosynthesis; molybdopterin biosynthesis. Its activity is regulated as follows. Enzymatic activity may be regulated by TtuB conjugation. Its function is as follows. Adenylyltransferase involved in the biosynthesis of several sulfur compounds. Is required for the 2-thiolation of 5-methyluridine residue at position 54 in the T loop of tRNAs, leading to 5-methyl-2-thiouridine (m(5)s(2)U or s(2)T). This modification allows thermal stabilization of tRNAs in thermophilic microorganisms, and is essential for cell growth at high temperatures. TtuC catalyzes the adenylation by ATP of the carboxyl group of the C-terminal glycine of sulfur carrier protein TtuB. Is also involved in the biosynthesis of thiamine, molybdenum cofactor (Moco) and probably tungsten cofactor (Wco), by adenylating the sulfur carriers ThiS and MoaD. Is required for the conjugation of TtuB to target proteins. This is Sulfur carrier protein adenylyltransferase from Thermus thermophilus (strain ATCC BAA-163 / DSM 7039 / HB27).